The following is a 287-amino-acid chain: Glutamate racemase (287 aa).

Residues 32–33 and 64–65 contribute to the substrate site; these read DS and YG. Cysteine 96 acts as the Proton donor/acceptor in catalysis. Position 97 to 98 (97 to 98) interacts with substrate; it reads NT. The Proton donor/acceptor role is filled by cysteine 208. 209-210 contributes to the substrate binding site; that stretch reads TH.

Belongs to the aspartate/glutamate racemases family.

The catalysed reaction is L-glutamate = D-glutamate. It functions in the pathway cell wall biogenesis; peptidoglycan biosynthesis. Functionally, provides the (R)-glutamate required for cell wall biosynthesis. This is Glutamate racemase from Yersinia enterocolitica serotype O:8 / biotype 1B (strain NCTC 13174 / 8081).